A 165-amino-acid polypeptide reads, in one-letter code: Ribosome maturation factor RimM (165 aa).

The PRC barrel domain occupies 94–165 (EDEFYIADLT…YVILNYQREA (72 aa)).

Belongs to the RimM family. In terms of assembly, binds ribosomal protein uS19.

It localises to the cytoplasm. Functionally, an accessory protein needed during the final step in the assembly of 30S ribosomal subunit, possibly for assembly of the head region. Essential for efficient processing of 16S rRNA. May be needed both before and after RbfA during the maturation of 16S rRNA. It has affinity for free ribosomal 30S subunits but not for 70S ribosomes. The polypeptide is Ribosome maturation factor RimM (Rickettsia rickettsii (strain Iowa)).